The chain runs to 135 residues: uncharacterized protein (135 aa).

The 116-residue stretch at 8-123 folds into the HotDog ACOT-type domain; it reads PKGKMVLRTL…IFVYVAVDEF (116 aa).

It belongs to the acyl coenzyme A hydrolase family.

This is an uncharacterized protein from Buchnera aphidicola subsp. Baizongia pistaciae (strain Bp).